A 443-amino-acid chain; its full sequence is Methyl-coenzyme M reductase I subunit beta (443 aa).

Residue tyrosine 367 coordinates coenzyme M. Glycine 369 is a coenzyme B binding site.

This sequence belongs to the methyl-coenzyme M reductase beta subunit family. MCR is a hexamer of two alpha, two beta, and two gamma chains, forming a dimer of heterotrimers. Requires coenzyme F430 as cofactor.

Its subcellular location is the cytoplasm. It carries out the reaction coenzyme B + methyl-coenzyme M = methane + coenzyme M-coenzyme B heterodisulfide. It functions in the pathway one-carbon metabolism; methyl-coenzyme M reduction; methane from methyl-coenzyme M: step 1/1. Component of the methyl-coenzyme M reductase (MCR) I that catalyzes the reductive cleavage of methyl-coenzyme M (CoM-S-CH3 or 2-(methylthio)ethanesulfonate) using coenzyme B (CoB or 7-mercaptoheptanoylthreonine phosphate) as reductant which results in the production of methane and the mixed heterodisulfide of CoB and CoM (CoM-S-S-CoB). This is the final step in methanogenesis. The chain is Methyl-coenzyme M reductase I subunit beta (mcrB) from Methanothermobacter thermautotrophicus (strain ATCC 29096 / DSM 1053 / JCM 10044 / NBRC 100330 / Delta H) (Methanobacterium thermoautotrophicum).